We begin with the raw amino-acid sequence, 185 residues long: Probable RNA polymerase sigma-C factor (185 aa).

The short motif at 52 to 65 (DLTQETFLRAIGAI) is the Polymerase core binding element. Residues 149–168 (YADAAAVCGCPVGTIRSRVA) constitute a DNA-binding region (H-T-H motif).

The protein belongs to the sigma-70 factor family. ECF subfamily.

Sigma factors are initiation factors that promote the attachment of RNA polymerase to specific initiation sites and are then released. The polypeptide is Probable RNA polymerase sigma-C factor (sigC) (Mycobacterium bovis (strain ATCC BAA-935 / AF2122/97)).